Reading from the N-terminus, the 178-residue chain is uncharacterized protein (178 aa).

It belongs to the mimivirus L114/R131 family.

This is an uncharacterized protein from Acanthamoeba polyphaga mimivirus (APMV).